Here is a 421-residue protein sequence, read N- to C-terminus: MLLAIGVIVWCWGLLSRRPMLRRQGKQKGRCCVLFSDLEVFLLRPPTPSASPPAFTPMNELNAEGNATSSATESHSLANGHYQPVTGEEALDTRGPDDWTHSVVDPPRTLDCCSSSEDCSKEKLDERLSLNSCTDSGVRTPLCRICFQGPEQGELLSPCRCSGSVRCTHEPCLIKWISERGSWSCELCYYKYQVIAISTKNPLQWQAISLTVIEKVQIAAAVLGSLFLIASISWLVWSSLSPSAKWQRQDLLFQICYAMYGFMDLVCIALIVHEGPSVFRIFNRWQAVNQQWKVLNYDKVKDNEDHQKTGATFRTLSLPLTHRMGQSGPEGEPSTSTSSLMAAAAAAAAGTVTPTTNSVPPAAGATTEPQDSSEPSNGQPSLPDHHCAYNILHLLSHLRQQEPRGQTSNSNRELVMRVTTV.

The signal sequence occupies residues M1 to S16. Residues E60–N79 are disordered. Positions G65 to L77 are enriched in polar residues. An RING-CH-type zinc finger spans residues D135–I195. Zn(2+) is bound by residues C143, C146, C159, C161, H169, C172, C185, and C188. Helical transmembrane passes span I218–S238 and L252–V272. Disordered stretches follow at residues P319 to H385 and Q401 to V421. Polar residues-rich tracts occupy residues T367–P380 and P403–R412.

The protein resides in the golgi apparatus membrane. It carries out the reaction S-ubiquitinyl-[E2 ubiquitin-conjugating enzyme]-L-cysteine + [acceptor protein]-L-lysine = [E2 ubiquitin-conjugating enzyme]-L-cysteine + N(6)-ubiquitinyl-[acceptor protein]-L-lysine.. Its pathway is protein modification; protein ubiquitination. E3 ubiquitin-protein ligase. E3 ubiquitin ligases accept ubiquitin from an E2 ubiquitin-conjugating enzyme in the form of a thioester and then directly transfer the ubiquitin to targeted substrates. This is E3 ubiquitin-protein ligase MARCHF4 (marchf4) from Danio rerio (Zebrafish).